Consider the following 259-residue polypeptide: Phosphatidylserine decarboxylase proenzyme (259 aa).

Ser183 serves as the catalytic Schiff-base intermediate with substrate; via pyruvic acid. Ser183 carries the pyruvic acid (Ser); by autocatalysis modification.

This sequence belongs to the phosphatidylserine decarboxylase family. PSD-A subfamily. Heterodimer of a large membrane-associated beta subunit and a small pyruvoyl-containing alpha subunit. Pyruvate is required as a cofactor. Post-translationally, is synthesized initially as an inactive proenzyme. Formation of the active enzyme involves a self-maturation process in which the active site pyruvoyl group is generated from an internal serine residue via an autocatalytic post-translational modification. Two non-identical subunits are generated from the proenzyme in this reaction, and the pyruvate is formed at the N-terminus of the alpha chain, which is derived from the carboxyl end of the proenzyme. The post-translation cleavage follows an unusual pathway, termed non-hydrolytic serinolysis, in which the side chain hydroxyl group of the serine supplies its oxygen atom to form the C-terminus of the beta chain, while the remainder of the serine residue undergoes an oxidative deamination to produce ammonia and the pyruvoyl prosthetic group on the alpha chain.

Its subcellular location is the cell membrane. The enzyme catalyses a 1,2-diacyl-sn-glycero-3-phospho-L-serine + H(+) = a 1,2-diacyl-sn-glycero-3-phosphoethanolamine + CO2. Its pathway is phospholipid metabolism; phosphatidylethanolamine biosynthesis; phosphatidylethanolamine from CDP-diacylglycerol: step 2/2. Catalyzes the formation of phosphatidylethanolamine (PtdEtn) from phosphatidylserine (PtdSer). This chain is Phosphatidylserine decarboxylase proenzyme, found in Neisseria gonorrhoeae (strain ATCC 700825 / FA 1090).